Reading from the N-terminus, the 431-residue chain is Serine--tRNA ligase (431 aa).

235-237 (TAE) lines the L-serine pocket. Residues 266–268 (RRE) and V282 contribute to the ATP site. E289 serves as a coordination point for L-serine. Residue 353-356 (EASS) coordinates ATP. S389 lines the L-serine pocket.

Belongs to the class-II aminoacyl-tRNA synthetase family. Type-1 seryl-tRNA synthetase subfamily. Homodimer. The tRNA molecule binds across the dimer.

The protein resides in the cytoplasm. The enzyme catalyses tRNA(Ser) + L-serine + ATP = L-seryl-tRNA(Ser) + AMP + diphosphate + H(+). The catalysed reaction is tRNA(Sec) + L-serine + ATP = L-seryl-tRNA(Sec) + AMP + diphosphate + H(+). It participates in aminoacyl-tRNA biosynthesis; selenocysteinyl-tRNA(Sec) biosynthesis; L-seryl-tRNA(Sec) from L-serine and tRNA(Sec): step 1/1. In terms of biological role, catalyzes the attachment of serine to tRNA(Ser). Is also able to aminoacylate tRNA(Sec) with serine, to form the misacylated tRNA L-seryl-tRNA(Sec), which will be further converted into selenocysteinyl-tRNA(Sec). In Chlorobium phaeobacteroides (strain DSM 266 / SMG 266 / 2430), this protein is Serine--tRNA ligase.